The chain runs to 314 residues: tRNA dimethylallyltransferase (314 aa).

12-19 (GPTASGKT) lines the ATP pocket. Substrate is bound at residue 14 to 19 (TASGKT). 2 interaction with substrate tRNA regions span residues 37 to 40 (DSAL) and 162 to 166 (QRIIR).

This sequence belongs to the IPP transferase family. In terms of assembly, monomer. It depends on Mg(2+) as a cofactor.

It carries out the reaction adenosine(37) in tRNA + dimethylallyl diphosphate = N(6)-dimethylallyladenosine(37) in tRNA + diphosphate. Functionally, catalyzes the transfer of a dimethylallyl group onto the adenine at position 37 in tRNAs that read codons beginning with uridine, leading to the formation of N6-(dimethylallyl)adenosine (i(6)A). This is tRNA dimethylallyltransferase from Acinetobacter baumannii (strain SDF).